The chain runs to 874 residues: Alanine--tRNA ligase (874 aa).

Residues H562, H566, C664, and H668 each coordinate Zn(2+).

The protein belongs to the class-II aminoacyl-tRNA synthetase family. Zn(2+) is required as a cofactor.

Its subcellular location is the cytoplasm. It catalyses the reaction tRNA(Ala) + L-alanine + ATP = L-alanyl-tRNA(Ala) + AMP + diphosphate. Its function is as follows. Catalyzes the attachment of alanine to tRNA(Ala) in a two-step reaction: alanine is first activated by ATP to form Ala-AMP and then transferred to the acceptor end of tRNA(Ala). Also edits incorrectly charged Ser-tRNA(Ala) and Gly-tRNA(Ala) via its editing domain. This chain is Alanine--tRNA ligase, found in Shewanella loihica (strain ATCC BAA-1088 / PV-4).